Reading from the N-terminus, the 225-residue chain is C-reactive protein (225 aa).

Residues 1 to 19 (MAKLLLYFLLLTSLSDVFG) form the signal peptide. The 202-residue stretch at 24–225 (SKKTFVFPKE…EVFIKPQLWP (202 aa)) folds into the Pentraxin (PTX) domain. Cys-55 and Cys-116 are oxidised to a cystine. Ca(2+)-binding residues include Asn-80, Gln-158, Asp-159, and Gln-169.

This sequence belongs to the pentraxin family. Homopentamer. Pentraxin (or pentaxin) have a discoid arrangement of 5 non-covalently bound subunits. Interacts with FCN1; may regulate monocyte activation by FCN1. The cofactor is Ca(2+). Found in plasma.

Its subcellular location is the secreted. Its function is as follows. Displays several functions associated with host defense: it promotes agglutination, bacterial capsular swelling, phagocytosis and complement fixation through its calcium-dependent binding to phosphorylcholine. Can interact with DNA and histones and may scavenge nuclear material released from damaged circulating cells. This Cavia porcellus (Guinea pig) protein is C-reactive protein (CRP).